A 459-amino-acid polypeptide reads, in one-letter code: ATP-dependent 6-phosphofructokinase (459 aa).

Residues Gly-89, 154-155 (RG), and 179-182 (GDGG) each bind ATP. Asp-180 contributes to the Mg(2+) binding site. Substrate is bound by residues 208-210 (TID), 253-255 (MGR), Glu-309, and 368-371 (YAIR). Catalysis depends on Asp-210, which acts as the Proton acceptor.

Belongs to the phosphofructokinase type A (PFKA) family. PPi-dependent PFK group II subfamily. Atypical ATP-dependent clade 'X' sub-subfamily. Homodimer. The cofactor is Mg(2+).

The protein resides in the cytoplasm. The catalysed reaction is beta-D-fructose 6-phosphate + ATP = beta-D-fructose 1,6-bisphosphate + ADP + H(+). It functions in the pathway carbohydrate degradation; glycolysis; D-glyceraldehyde 3-phosphate and glycerone phosphate from D-glucose: step 3/4. With respect to regulation, AMP causes 20-40% inhibition and diphosphate causes 20-50% inhibition. ADP, citrate, PEP and FBP have no effect. Catalyzes the phosphorylation of D-fructose 6-phosphate to fructose 1,6-bisphosphate by ATP, the first committing step of glycolysis. The sequence is that of ATP-dependent 6-phosphofructokinase from Amycolatopsis methanolica.